Consider the following 614-residue polypeptide: MYPLLDRIEIPAQLRNLKRSQLPQLADELRSFLIESVAKTGGHLSSNLGTIELTIALHYIFDTPFDRLVWDVGHQTYAHKILTGRRTGMAHLRMQGGIAGFPRRDESEYDAFGTAHSSTSISAALGMAVAARINKIKQHAIAIIGDGAMSAGMAFEALNNAGVMDADLLVILNDNDMSISPPVGALNHYLAKLMSGRFYATARRAGERMLGVVPPVLELAKRAEEHVKGMVTPGTLFEEFGFNYIGPIDGHDLDILLTTLNNIKQLDGPQFLHIVTRKGKGYKPAEEDPVLYHGVGKFEPGKGVIPKPSTRPAYTQIFGDWLCDMAAKDSRLIGITPAMREGSGLIRFSKEYPDRYFDVGIAEQHAVTFAAGAACEGLKPVVAIYSTFLQRAYDQLIHDVAIQNLPVVFAIDRAGLVGADGPTHAGSFDLSYLRCIPNITVMMPADENECRQMLYTAFQLDTPTAVRYPRGTGPGVQIKQEMQIVPLGKGEIRRQGTRIALLAFGSMLSPCLEAGDELDATVVNMRFVKPLDQELVMTLAAEHELLVTVEENTIMGGAGSAVLECLASQGVNIRLLQLGLSDNFLDQGDPAQMLSDCGLDKTGIIKSVKERLSL.

Residues His-74 and 115-117 (AHS) contribute to the thiamine diphosphate site. Asp-146 is a Mg(2+) binding site. Thiamine diphosphate contacts are provided by residues 147–148 (GA), Asn-175, Tyr-282, and Glu-363. Asn-175 serves as a coordination point for Mg(2+).

Belongs to the transketolase family. DXPS subfamily. In terms of assembly, homodimer. Mg(2+) serves as cofactor. Thiamine diphosphate is required as a cofactor.

It carries out the reaction D-glyceraldehyde 3-phosphate + pyruvate + H(+) = 1-deoxy-D-xylulose 5-phosphate + CO2. The protein operates within metabolic intermediate biosynthesis; 1-deoxy-D-xylulose 5-phosphate biosynthesis; 1-deoxy-D-xylulose 5-phosphate from D-glyceraldehyde 3-phosphate and pyruvate: step 1/1. Catalyzes the acyloin condensation reaction between C atoms 2 and 3 of pyruvate and glyceraldehyde 3-phosphate to yield 1-deoxy-D-xylulose-5-phosphate (DXP). This is 1-deoxy-D-xylulose-5-phosphate synthase from Nitrosomonas eutropha (strain DSM 101675 / C91 / Nm57).